We begin with the raw amino-acid sequence, 573 residues long: Excitatory amino acid transporter 2 (573 aa).

Positions 1 to 11 are enriched in polar residues; that stretch reads MASTEGANNMP. Residues 1-29 are disordered; sequence MASTEGANNMPKQVEVRMHDSHLSSEEPK. The Cytoplasmic segment spans residues 1-44; that stretch reads MASTEGANNMPKQVEVRMHDSHLSSEEPKHRNLGMRMCDKLGKN. Phosphoserine is present on residues Ser-3, Ser-21, Ser-24, and Ser-25. Positions 14-29 are enriched in basic and acidic residues; the sequence is VEVRMHDSHLSSEEPK. Cys-38 is lipidated: S-palmitoyl cysteine. Transmembrane regions (helical) follow at residues 45–64, 88–108, and 121–142; these read LLLS…GGLL, MLKM…LSGL, and MVYY…VLAI. 2 N-linked (GlcNAc...) asparagine glycosylation sites follow: Asn-205 and Asn-215. Helical transmembrane passes span 235 to 258, 268 to 295, and 317 to 338; these read FKDG…MGKM, FFNI…ACLI, and ITVI…YFVV. Residues 344-374 constitute an intramembrane region (discontinuously helical); that stretch reads FSFFAGIFQAWITALGTASSAGTLPVTFRCL. Position 361–363 (361–363) interacts with L-aspartate; sequence ASS. Residues 384 to 410 form a helical membrane-spanning segment; sequence VTRFVLPVGATINMDGTALYEAVAAIF. Residues Gly-392, Thr-394, and Asn-396 each contribute to the Na(+) site. L-aspartate-binding positions include Thr-400, 441-445, Asp-474, and Asn-481; that span reads IPSAG. Positions 424 to 457 form an intramembrane region, discontinuously helical; the sequence is IVTVSLTATLASIGAASIPSAGLVTMLLILTAVG. A helical transmembrane segment spans residues 471 to 492; that stretch reads WLLDRMRTSVNVVGDSFGAGIV. Na(+) is bound by residues Asn-481 and Asp-485. Phosphoserine occurs at positions 505, 520, 531, and 533. Tyr-538 carries the post-translational modification Phosphotyrosine. Phosphoserine occurs at positions 543, 559, and 563.

Belongs to the dicarboxylate/amino acid:cation symporter (DAACS) (TC 2.A.23) family. SLC1A2 subfamily. In terms of assembly, homotrimer. Interacts with AJUBA. In terms of processing, glycosylated. Post-translationally, palmitoylation at Cys-38 is not required for correct subcellular localization, but is important for glutamate uptake activity. Localized in brain and is highly enriched in the Purkinje cell layer in cerebellum.

It localises to the cell membrane. The catalysed reaction is K(+)(in) + L-glutamate(out) + 3 Na(+)(out) + H(+)(out) = K(+)(out) + L-glutamate(in) + 3 Na(+)(in) + H(+)(in). It catalyses the reaction D-aspartate(out) + K(+)(in) + 3 Na(+)(out) + H(+)(out) = D-aspartate(in) + K(+)(out) + 3 Na(+)(in) + H(+)(in). It carries out the reaction K(+)(in) + L-aspartate(out) + 3 Na(+)(out) + H(+)(out) = K(+)(out) + L-aspartate(in) + 3 Na(+)(in) + H(+)(in). Sodium-dependent, high-affinity amino acid transporter that mediates the uptake of L-glutamate and also L-aspartate and D-aspartate. Functions as a symporter that transports one amino acid molecule together with two or three Na(+) ions and one proton, in parallel with the counter-transport of one K(+) ion. Mediates Cl(-) flux that is not coupled to amino acid transport; this avoids the accumulation of negative charges due to aspartate and Na(+) symport. Essential for the rapid removal of released glutamate from the synaptic cleft, and for terminating the postsynaptic action of glutamate. In Rattus norvegicus (Rat), this protein is Excitatory amino acid transporter 2 (Slc1a2).